We begin with the raw amino-acid sequence, 633 residues long: Peptidoglycan D,D-transpeptidase MrdA (633 aa).

A helical membrane pass occupies residues 22–42 (LVAFLGILLLTGVLIANLYNL). Residue S330 is the Acyl-ester intermediate of the active site.

Belongs to the transpeptidase family. MrdA subfamily.

The protein resides in the cell inner membrane. The enzyme catalyses Preferential cleavage: (Ac)2-L-Lys-D-Ala-|-D-Ala. Also transpeptidation of peptidyl-alanyl moieties that are N-acyl substituents of D-alanine.. It participates in cell wall biogenesis; peptidoglycan biosynthesis. Its function is as follows. Catalyzes cross-linking of the peptidoglycan cell wall. The polypeptide is Peptidoglycan D,D-transpeptidase MrdA (Escherichia coli O157:H7).